The sequence spans 305 residues: Sulfate adenylyltransferase subunit 2 (305 aa).

The tract at residues 283–305 (RQGRVIDHDQSASMEKKKQEGYF) is disordered.

Belongs to the PAPS reductase family. CysD subfamily. Heterodimer composed of CysD, the smaller subunit, and CysN.

The enzyme catalyses sulfate + ATP + H(+) = adenosine 5'-phosphosulfate + diphosphate. It participates in sulfur metabolism; hydrogen sulfide biosynthesis; sulfite from sulfate: step 1/3. In terms of biological role, with CysN forms the ATP sulfurylase (ATPS) that catalyzes the adenylation of sulfate producing adenosine 5'-phosphosulfate (APS) and diphosphate, the first enzymatic step in sulfur assimilation pathway. APS synthesis involves the formation of a high-energy phosphoric-sulfuric acid anhydride bond driven by GTP hydrolysis by CysN coupled to ATP hydrolysis by CysD. This chain is Sulfate adenylyltransferase subunit 2, found in Caulobacter sp. (strain K31).